The chain runs to 353 residues: Nicotinate-nucleotide--dimethylbenzimidazole phosphoribosyltransferase (353 aa).

The active-site Proton acceptor is Glu-318.

It belongs to the CobT family.

It carries out the reaction 5,6-dimethylbenzimidazole + nicotinate beta-D-ribonucleotide = alpha-ribazole 5'-phosphate + nicotinate + H(+). The protein operates within nucleoside biosynthesis; alpha-ribazole biosynthesis; alpha-ribazole from 5,6-dimethylbenzimidazole: step 1/2. In terms of biological role, catalyzes the synthesis of alpha-ribazole-5'-phosphate from nicotinate mononucleotide (NAMN) and 5,6-dimethylbenzimidazole (DMB). The sequence is that of Nicotinate-nucleotide--dimethylbenzimidazole phosphoribosyltransferase from Chloroflexus aggregans (strain MD-66 / DSM 9485).